The following is a 977-amino-acid chain: Receptor-like protein kinase 7 (977 aa).

A signal peptide spans 1–28 (MAPSLRNFNFFHRFSTFLVFSLFSVVSS). Over 29–608 (DDLQVLLKLK…NPSRSHGDTR (580 aa)) the chain is Extracellular. 3 LRR repeats span residues 71–95 (RGNV…SVCE), 96–119 (IQSL…DLKN), and 121–145 (TSLK…SLNQ). N-linked (GlcNAc...) asparagine glycosylation is found at N73 and N119. 2 N-linked (GlcNAc...) asparagine glycosylation sites follow: N152 and N167. LRR repeat units follow at residues 168 to 194 (ATSL…VVSL), 195 to 218 (KKLS…IGDL), 219 to 242 (TELR…ISKL), 244 to 265 (NLWQ…GFGN), 267 to 289 (KNLT…LRSL), 290 to 312 (TNLV…EFGE), 313 to 337 (FKDL…LGSL), 339 to 361 (DFDF…MCKN), 362 to 385 (GKMK…YANC), 386 to 409 (LTLQ…LWGL), 411 to 433 (KLEI…IKNG), 434 to 457 (KMLG…IGDT), 458 to 481 (ESLT…IGKL), 482 to 505 (KGLS…IGSC), 507 to 529 (MLSD…LGSL), 530 to 553 (PTLN…LSSL), and 555 to 578 (LSLL…SYNG). A glycan (N-linked (GlcNAc...) asparagine) is linked at N204. N-linked (GlcNAc...) asparagine glycosylation is found at N252 and N268. N-linked (GlcNAc...) asparagine glycosylation is present at N318. N-linked (GlcNAc...) asparagine glycosylation is found at N373 and N399. N-linked (GlcNAc...) asparagine glycans are attached at residues N536 and N577. Residues 609 to 629 (VFVLCIVFGLLILLASLVFFL) form a helical membrane-spanning segment. Residues 630–977 (YLKKTEKKEG…ESDVKVKEIS (348 aa)) are Cytoplasmic-facing. Residues 666–959 (IKEENLIGRG…QMIEDAEPCR (294 aa)) form the Protein kinase domain. ATP contacts are provided by residues 672–680 (IGRGGCGDV) and K694. The active-site Proton acceptor is the D805.

This sequence belongs to the protein kinase superfamily. Ser/Thr protein kinase family. In terms of assembly, interacts with PIP1. Expressed in roots, stems and dry seeds. Expressed at junctions between organs, such as the insertion zones of stamens, petals and sepals, the transition zones of floral stem and pedicel, pedicel and silique, and floral stem and cauline leaves.

The protein resides in the membrane. It carries out the reaction L-seryl-[protein] + ATP = O-phospho-L-seryl-[protein] + ADP + H(+). The enzyme catalyses L-threonyl-[protein] + ATP = O-phospho-L-threonyl-[protein] + ADP + H(+). Plays a role in pattern-triggered immunity (PTI) signaling induced by pathogen-associated molecular patterns (PAMPs). Acts as a receptor for PIP1 defense peptide. PIP1 is an endogenous secreted peptide that acts as elicitor of immune response and positive regulator of defense response. Involved in the control of seed germination speed, in tolerance to oxidative stress and in maintaining seed longevity. In Arabidopsis thaliana (Mouse-ear cress), this protein is Receptor-like protein kinase 7.